The following is a 488-amino-acid chain: NADH-ubiquinone oxidoreductase chain 2 (488 aa).

14 consecutive transmembrane segments (helical) span residues 11 to 31, 38 to 58, 74 to 94, 106 to 126, 129 to 149, 162 to 182, 211 to 231, 239 to 259, 271 to 291, 299 to 319, 331 to 351, 376 to 396, 412 to 434, and 460 to 480; these read MIKYSIYLVPLIIMILLSISI, MMLLFKSLKLTIILILVLLTI, ELITFVEYILLVVSYLIISMF, ITEEALILMYSSLIGMLISME, NLITLFLSLEITSICFYILAL, LKYYIIGGIASTIILLGIVSI, IALIVLGLIIKLGVAPFHGWL, GMLMTFYLTITQKIVTIIVLI, IEVINKGLLVLILVTLIVGTV, VIRFIAYSAIVNSALLILFFV, IYYLINYIIGLAVLINIIIGV, IGISLIIVLIYLAGLPPFTNF, IYITMIIFFLTVGIMIYYMNVVK, and IVGGIIWIIISQIYLDEIISI.

The protein belongs to the complex I subunit 2 family.

Its subcellular location is the mitochondrion inner membrane. It catalyses the reaction a ubiquinone + NADH + 5 H(+)(in) = a ubiquinol + NAD(+) + 4 H(+)(out). In terms of biological role, core subunit of the mitochondrial membrane respiratory chain NADH dehydrogenase (Complex I) that is believed to belong to the minimal assembly required for catalysis. Complex I functions in the transfer of electrons from NADH to the respiratory chain. The immediate electron acceptor for the enzyme is believed to be ubiquinone. The sequence is that of NADH-ubiquinone oxidoreductase chain 2 (nad2) from Dictyostelium discoideum (Social amoeba).